A 298-amino-acid chain; its full sequence is Probable GTP 3',8-cyclase (298 aa).

In terms of domain architecture, Radical SAM core spans 4 to 227 (RYGREIRSFR…MQNRKKYVID (224 aa)). GTP is bound at residue R13. C20 and C24 together coordinate [4Fe-4S] cluster. S-adenosyl-L-methionine is bound at residue Y26. C27 provides a ligand contact to [4Fe-4S] cluster. GTP is bound at residue K61. G65 lines the S-adenosyl-L-methionine pocket. T91 contacts GTP. Residue S115 coordinates S-adenosyl-L-methionine. Residue K152 participates in GTP binding. [4Fe-4S] cluster contacts are provided by C243 and C246. 248–250 (RIR) lines the GTP pocket. C260 provides a ligand contact to [4Fe-4S] cluster.

It belongs to the radical SAM superfamily. MoaA family. [4Fe-4S] cluster is required as a cofactor.

It carries out the reaction GTP + AH2 + S-adenosyl-L-methionine = (8S)-3',8-cyclo-7,8-dihydroguanosine 5'-triphosphate + 5'-deoxyadenosine + L-methionine + A + H(+). It functions in the pathway cofactor biosynthesis; molybdopterin biosynthesis. In terms of biological role, catalyzes the cyclization of GTP to (8S)-3',8-cyclo-7,8-dihydroguanosine 5'-triphosphate. In Methanococcus maripaludis (strain C6 / ATCC BAA-1332), this protein is Probable GTP 3',8-cyclase.